The chain runs to 605 residues: Protein DENND6A (605 aa).

Residues 1-20 form a disordered region; it reads MALPGPAVFGPGSRGSLDEA. Positions 60-239 constitute a uDENN domain; that stretch reads HCVCVVGFDL…KVRIPTCHDK (180 aa). Phosphoserine is present on Ser-124. Residues 265–390 enclose the cDENN domain; it reads EVDLFRCFCP…VKVKKLKNLK (126 aa). One can recognise a dDENN domain in the interval 392–525; sequence LDSKPGVYTS…KTRRKEMTQK (134 aa). Lys-507 bears the N6-methyllysine mark.

Belongs to the DENND6 family.

The protein localises to the recycling endosome. The protein resides in the cytoplasm. Its function is as follows. Guanine nucleotide exchange factor (GEF) for RAB14. Component of an endocytic recycling pathway that is required for the control of ADAM10 transport, shedding of N-cadherin/CDH2 by ADAM9 or ADAM10 and regulation of cell-cell junctions. Required for RAB14 recruitment to recycling endosomes. This Mus musculus (Mouse) protein is Protein DENND6A (Dennd6a).